A 319-amino-acid polypeptide reads, in one-letter code: N-acetyl-D-glucosamine kinase (319 aa).

T14 lines the ATP pocket. Substrate-binding residues include N37 and D113. T135 serves as a coordination point for ATP. Substrate-binding positions include 153-155 (GWG) and D160. A220 serves as a coordination point for ATP.

This sequence belongs to the eukaryotic-type N-acetylglucosamine kinase family. As to quaternary structure, homodimer.

It carries out the reaction N-acetyl-D-glucosamine + ATP = N-acetyl-D-glucosamine 6-phosphate + ADP + H(+). Converts N-acetylglucosamine (GlcNAc), a major component of complex carbohydrates, into GlcNAc 6-phosphate. Also has ManNAc kinase activity. This chain is N-acetyl-D-glucosamine kinase (nagk), found in Dictyostelium discoideum (Social amoeba).